Consider the following 752-residue polypeptide: Lid2 complex component jmj3 (752 aa).

The 42-residue stretch at 34–75 (IPVVEPKISEFVDMESFIRRVERLGKKYGAIKVVRPSSVLNP) folds into the JmjN domain. One can recognise a JmjC domain in the interval 162-333 (YTNRPSIPFY…NYEFSNLRRL (172 aa)). Polar residues-rich tracts occupy residues 391-402 (SFSQRDFDSPNS) and 409-423 (LMSN…HFNS). The tract at residues 391–438 (SFSQRDFDSPNSINPPSPLMSNHESASTEHFNSTTTTEKELSSLHVGE) is disordered. Residues 427 to 438 (TEKELSSLHVGE) show a composition bias toward basic and acidic residues.

In terms of assembly, component of the Lid2 complex composed of ash2, jmj3, lid2, sdc1 and snt2.

It localises to the nucleus. This Schizosaccharomyces pombe (strain 972 / ATCC 24843) (Fission yeast) protein is Lid2 complex component jmj3.